The primary structure comprises 372 residues: Flagellar P-ring protein (372 aa).

An N-terminal signal peptide occupies residues M1 to A26.

Belongs to the FlgI family. In terms of assembly, the basal body constitutes a major portion of the flagellar organelle and consists of four rings (L,P,S, and M) mounted on a central rod.

Its subcellular location is the periplasm. The protein resides in the bacterial flagellum basal body. In terms of biological role, assembles around the rod to form the L-ring and probably protects the motor/basal body from shearing forces during rotation. The protein is Flagellar P-ring protein of Xanthomonas campestris pv. campestris (strain B100).